Consider the following 625-residue polypeptide: Probable potassium transport system protein Kup 2 (625 aa).

The next 12 helical transmembrane spans lie at 15 to 35, 52 to 72, 98 to 118, 134 to 154, 164 to 184, 203 to 223, 246 to 266, 284 to 304, 336 to 356, 365 to 385, 394 to 414, and 417 to 437; these read LSFA…LYAF, ILSL…LVIV, GGWL…DGIL, LSPN…FFLF, IGIY…VLGF, IYFF…VFLV, WFAV…AFVL, FLPV…QAII, VYLP…VVIF, AYGI…GIIA, FKVM…AGNI, and LLTG…VMYT.

It belongs to the HAK/KUP transporter (TC 2.A.72) family.

It localises to the cell inner membrane. It carries out the reaction K(+)(in) + H(+)(in) = K(+)(out) + H(+)(out). In terms of biological role, transport of potassium into the cell. Likely operates as a K(+):H(+) symporter. The chain is Probable potassium transport system protein Kup 2 from Legionella pneumophila subsp. pneumophila (strain Philadelphia 1 / ATCC 33152 / DSM 7513).